The sequence spans 101 residues: NADH-quinone oxidoreductase subunit K (101 aa).

A run of 3 helical transmembrane segments spans residues 4 to 24 (LSHY…GIFI), 30 to 50 (IVIL…LVAF), and 65 to 85 (FVLT…VVFF).

This sequence belongs to the complex I subunit 4L family. NDH-1 is composed of 14 different subunits. Subunits NuoA, H, J, K, L, M, N constitute the membrane sector of the complex.

The protein resides in the cell inner membrane. It catalyses the reaction a quinone + NADH + 5 H(+)(in) = a quinol + NAD(+) + 4 H(+)(out). Functionally, NDH-1 shuttles electrons from NADH, via FMN and iron-sulfur (Fe-S) centers, to quinones in the respiratory chain. The immediate electron acceptor for the enzyme in this species is believed to be ubiquinone. Couples the redox reaction to proton translocation (for every two electrons transferred, four hydrogen ions are translocated across the cytoplasmic membrane), and thus conserves the redox energy in a proton gradient. The polypeptide is NADH-quinone oxidoreductase subunit K (Methylobacterium sp. (strain 4-46)).